We begin with the raw amino-acid sequence, 185 residues long: Elongation factor P (185 aa).

Belongs to the elongation factor P family.

The protein localises to the cytoplasm. Its pathway is protein biosynthesis; polypeptide chain elongation. Functionally, involved in peptide bond synthesis. Stimulates efficient translation and peptide-bond synthesis on native or reconstituted 70S ribosomes in vitro. Probably functions indirectly by altering the affinity of the ribosome for aminoacyl-tRNA, thus increasing their reactivity as acceptors for peptidyl transferase. This Pseudothermotoga lettingae (strain ATCC BAA-301 / DSM 14385 / NBRC 107922 / TMO) (Thermotoga lettingae) protein is Elongation factor P.